We begin with the raw amino-acid sequence, 471 residues long: 3-isopropylmalate dehydratase large subunit (471 aa).

The [4Fe-4S] cluster site is built by Cys-347, Cys-407, and Cys-410.

The protein belongs to the aconitase/IPM isomerase family. LeuC type 1 subfamily. Heterodimer of LeuC and LeuD. [4Fe-4S] cluster is required as a cofactor.

It catalyses the reaction (2R,3S)-3-isopropylmalate = (2S)-2-isopropylmalate. It functions in the pathway amino-acid biosynthesis; L-leucine biosynthesis; L-leucine from 3-methyl-2-oxobutanoate: step 2/4. Its function is as follows. Catalyzes the isomerization between 2-isopropylmalate and 3-isopropylmalate, via the formation of 2-isopropylmaleate. The chain is 3-isopropylmalate dehydratase large subunit from Anoxybacillus flavithermus (strain DSM 21510 / WK1).